The following is a 91-amino-acid chain: Elongation factor 1-beta (91 aa).

Belongs to the EF-1-beta/EF-1-delta family.

Its function is as follows. Promotes the exchange of GDP for GTP in EF-1-alpha/GDP, thus allowing the regeneration of EF-1-alpha/GTP that could then be used to form the ternary complex EF-1-alpha/GTP/AAtRNA. The protein is Elongation factor 1-beta (ef1b) of Pyrococcus abyssi (strain GE5 / Orsay).